The chain runs to 131 residues: Sec-independent protein translocase protein TatB (131 aa).

Residues 2 to 22 (LGSLSWEHMLVLVVVGLVVLG) traverse the membrane as a helical segment. The interval 96 to 131 (AFDRPVNGAAAQPPPAPAPPPEPHRSGQTPFDADAT) is disordered. Residues 107–116 (QPPPAPAPPP) show a composition bias toward pro residues.

It belongs to the TatB family. The Tat system comprises two distinct complexes: a TatABC complex, containing multiple copies of TatA, TatB and TatC subunits, and a separate TatA complex, containing only TatA subunits. Substrates initially bind to the TatABC complex, which probably triggers association of the separate TatA complex to form the active translocon.

The protein localises to the cell membrane. Its function is as follows. Part of the twin-arginine translocation (Tat) system that transports large folded proteins containing a characteristic twin-arginine motif in their signal peptide across membranes. Together with TatC, TatB is part of a receptor directly interacting with Tat signal peptides. TatB may form an oligomeric binding site that transiently accommodates folded Tat precursor proteins before their translocation. This is Sec-independent protein translocase protein TatB from Mycolicibacterium paratuberculosis (strain ATCC BAA-968 / K-10) (Mycobacterium paratuberculosis).